Consider the following 656-residue polypeptide: Translation factor GUF1 homolog, mitochondrial (656 aa).

In terms of domain architecture, tr-type G spans 55 to 236; sequence QRIRNFSIIA…EIVRRLPPPD (182 aa). GTP contacts are provided by residues 64–71, 129–133, and 183–186; these read AHVDHGKS, DTPGH, and NKID.

Belongs to the TRAFAC class translation factor GTPase superfamily. Classic translation factor GTPase family. LepA subfamily.

The protein resides in the mitochondrion inner membrane. It carries out the reaction GTP + H2O = GDP + phosphate + H(+). Its function is as follows. Promotes mitochondrial protein synthesis. May act as a fidelity factor of the translation reaction, by catalyzing a one-codon backward translocation of tRNAs on improperly translocated ribosomes. Binds to mitochondrial ribosomes in a GTP-dependent manner. The polypeptide is Translation factor GUF1 homolog, mitochondrial (Aedes aegypti (Yellowfever mosquito)).